The primary structure comprises 421 residues: MALLKSFIDVGSDSHFPIQNLPYGVFKPESNSTPRPAVAIGDLVLDLSAISEAGLFDGLILKDADCFLQPNLNKFLAMGRPAWKEARSTLQRILSSNEPILRDNDVLRRKSFHQMSKVEMIVPMVIGDYTDFFASMHHAKNCGLMFRGPENAINPNWFRLPIAYHGRASSIVISGTDIIRPRGQGHPQGNSEPYFGPSKKLDFELEMAAVVGPGNELGKPIDVNNAADHIFGLLLMNDWSARDIQAWEYVPLGPFLGKSFGTTISPWIVTLDALEPFGCQAPKQDPPPLPYLAEKESVNYDISLEVQLKPSGRDDSCVITKSNFQNLYWTITQQLAHHTVNGCNLRPGDLLGTGTISGPEPDSYGCLLELTWNGQKPLSLNGTTQTFLEDGDQVTFSGVCKGDGYNVGFGTCTGKIVPSPP.

Asp-131 contributes to the Ca(2+) binding site. The active-site Proton acceptor is the His-138. Arg-147 is a binding site for substrate. Positions 204, 206, and 238 each coordinate Ca(2+). Asp-238 contacts Mg(2+). Positions 245 and 249 each coordinate substrate. Residues Lys-258 and Thr-262 each contribute to the Mg(2+) site. Residue Thr-355 participates in substrate binding.

The protein belongs to the FAH family. It depends on Ca(2+) as a cofactor. Requires Mg(2+) as cofactor.

The enzyme catalyses 4-fumarylacetoacetate + H2O = acetoacetate + fumarate + H(+). It functions in the pathway amino-acid degradation; L-phenylalanine degradation; acetoacetate and fumarate from L-phenylalanine: step 6/6. Converts fumarylacetoacetate to acetoacetate and fumarate. Involved in tyrosine catabolic pathway. Catalyzes the final step in the tyrosine degradation pathway. In Arabidopsis thaliana (Mouse-ear cress), this protein is Fumarylacetoacetase.